Reading from the N-terminus, the 237-residue chain is Purine nucleoside phosphorylase DeoD-type (237 aa).

A purine D-ribonucleoside is bound at residue His-4. Residues Gly-20, Arg-24, Arg-43, and 87–90 contribute to the phosphate site; that span reads RVGT. A purine D-ribonucleoside-binding positions include 179 to 181 and 203 to 204; these read EME and SD. Residue Asp-204 is the Proton donor of the active site.

This sequence belongs to the PNP/UDP phosphorylase family. Homohexamer; trimer of homodimers.

It carries out the reaction a purine D-ribonucleoside + phosphate = a purine nucleobase + alpha-D-ribose 1-phosphate. The enzyme catalyses a purine 2'-deoxy-D-ribonucleoside + phosphate = a purine nucleobase + 2-deoxy-alpha-D-ribose 1-phosphate. Its function is as follows. Catalyzes the reversible phosphorolytic breakdown of the N-glycosidic bond in the beta-(deoxy)ribonucleoside molecules, with the formation of the corresponding free purine bases and pentose-1-phosphate. This chain is Purine nucleoside phosphorylase DeoD-type, found in Clostridium beijerinckii (strain ATCC 51743 / NCIMB 8052) (Clostridium acetobutylicum).